The sequence spans 161 residues: Transcriptional repressor NrdR (161 aa).

A zinc finger lies at 3–34 (CPSCQHTDSRVLESRAADSGKSVRRRRECLNC). One can recognise an ATP-cone domain in the interval 49–139 (ITVVKRSGTR…VYGKFSGISD (91 aa)).

It belongs to the NrdR family. The cofactor is Zn(2+).

Negatively regulates transcription of bacterial ribonucleotide reductase nrd genes and operons by binding to NrdR-boxes. The polypeptide is Transcriptional repressor NrdR (Synechococcus sp. (strain RCC307)).